The chain runs to 929 residues: Valine--tRNA ligase (929 aa).

The short motif at 40–50 (PNVTGHLHMGH) is the 'HIGH' region element. The 'KMSKS' region signature appears at 522–526 (KMSKS). ATP is bound at residue lysine 525. Positions 855-926 (LAGLIDKEAE…LEQQHAEITD (72 aa)) form a coiled coil.

This sequence belongs to the class-I aminoacyl-tRNA synthetase family. ValS type 1 subfamily. Monomer.

It is found in the cytoplasm. It catalyses the reaction tRNA(Val) + L-valine + ATP = L-valyl-tRNA(Val) + AMP + diphosphate. In terms of biological role, catalyzes the attachment of valine to tRNA(Val). As ValRS can inadvertently accommodate and process structurally similar amino acids such as threonine, to avoid such errors, it has a 'posttransfer' editing activity that hydrolyzes mischarged Thr-tRNA(Val) in a tRNA-dependent manner. The protein is Valine--tRNA ligase of Nitrosococcus oceani (strain ATCC 19707 / BCRC 17464 / JCM 30415 / NCIMB 11848 / C-107).